The primary structure comprises 117 residues: MFSIIFIALLILLITTIVMFLASILSKKALIDREKSSPFECGFDPKSSSRLPFSLRFFLITIIFLIFDVEIALILPMIIIMKYSNIMIWTITSIIFILILLIGLYHEWNQGMLNWSN.

A run of 3 helical transmembrane segments spans residues 4 to 24 (IIFI…LASI), 60 to 80 (ITII…MIII), and 86 to 106 (IMIW…GLYH).

Belongs to the complex I subunit 3 family.

The protein localises to the mitochondrion membrane. The enzyme catalyses a ubiquinone + NADH + 5 H(+)(in) = a ubiquinol + NAD(+) + 4 H(+)(out). Its function is as follows. Core subunit of the mitochondrial membrane respiratory chain NADH dehydrogenase (Complex I) that is believed to belong to the minimal assembly required for catalysis. Complex I functions in the transfer of electrons from NADH to the respiratory chain. The immediate electron acceptor for the enzyme is believed to be ubiquinone. This is NADH-ubiquinone oxidoreductase chain 3 (mt:ND3) from Drosophila melanogaster (Fruit fly).